A 390-amino-acid chain; its full sequence is Pyruvate dehydrogenase E1 component subunit alpha, somatic form, mitochondrial (390 aa).

The N-terminal 29 residues, 1–29, are a transit peptide targeting the mitochondrion; that stretch reads MRKMLAAVSRVLSGASQKPASRVLVASRN. Lysine 63 carries the N6-acetyllysine; alternate modification. The residue at position 63 (lysine 63) is an N6-succinyllysine; alternate. Pyruvate is bound by residues histidine 92, tyrosine 118, arginine 119, alanine 157, glycine 165, valine 167, aspartate 196, glycine 197, alanine 198, asparagine 225, and tyrosine 227. Residues tyrosine 118 and arginine 119 each coordinate thiamine diphosphate. Positions 165, 167, 196, 197, 198, and 225 each coordinate thiamine diphosphate. Residue aspartate 196 coordinates Mg(2+). Residues asparagine 225 and tyrosine 227 each coordinate Mg(2+). Serine 232 carries the phosphoserine; by PDK1 modification. Lysine 244 is modified (N6-acetyllysine; alternate). Residue lysine 244 is modified to N6-succinyllysine; alternate. Lysine 277 carries the N6-succinyllysine modification. Histidine 292 contacts thiamine diphosphate. The residue at position 293 (serine 293) is a Phosphoserine; by PDK1, PDK2, PDK3 and PDK4. Serine 295 is modified (phosphoserine). Serine 300 is modified (phosphoserine; by PDK1, PDK2, PDK3 and PDK4). Tyrosine 301 carries the phosphotyrosine modification. Lysine 313 is modified (N6-acetyllysine; alternate). An N6-succinyllysine; alternate modification is found at lysine 313. 2 positions are modified to N6-acetyllysine: lysine 321 and lysine 336. Residue lysine 385 is modified to N6-succinyllysine.

In terms of assembly, heterotetramer of two PDHA1 and two PDHB subunits. The heterotetramer interacts with DLAT, and is part of the multimeric pyruvate dehydrogenase complex that contains multiple copies of pyruvate dehydrogenase (E1), dihydrolipoamide acetyltransferase (DLAT, E2) and lipoamide dehydrogenase (DLD, E3). These subunits are bound to an inner core composed of about 48 DLAT and 12 PDHX molecules. It depends on thiamine diphosphate as a cofactor. Mg(2+) serves as cofactor. Post-translationally, phosphorylation at Ser-232, Ser-293 and Ser-300 by PDK family kinases inactivates the enzyme; for this phosphorylation at a single site is sufficient. Dephosphorylation at all three sites, i.e. at Ser-232, Ser-293 and Ser-300, is required for reactivation. In terms of processing, acetylation alters the phosphorylation pattern. Deacetylated by SIRT3. As to expression, ubiquitous.

It is found in the mitochondrion matrix. The catalysed reaction is N(6)-[(R)-lipoyl]-L-lysyl-[protein] + pyruvate + H(+) = N(6)-[(R)-S(8)-acetyldihydrolipoyl]-L-lysyl-[protein] + CO2. Pyruvate dehydrogenase activity is inhibited by phosphorylation of PDHA1; it is reactivated by dephosphorylation. In terms of biological role, the pyruvate dehydrogenase complex catalyzes the overall conversion of pyruvate to acetyl-CoA and CO(2), and thereby links the glycolytic pathway to the tricarboxylic cycle. The protein is Pyruvate dehydrogenase E1 component subunit alpha, somatic form, mitochondrial (PDHA1) of Homo sapiens (Human).